A 277-amino-acid polypeptide reads, in one-letter code: Bis(5'-nucleosyl)-tetraphosphatase, symmetrical (277 aa).

This sequence belongs to the Ap4A hydrolase family.

It catalyses the reaction P(1),P(4)-bis(5'-adenosyl) tetraphosphate + H2O = 2 ADP + 2 H(+). Functionally, hydrolyzes diadenosine 5',5'''-P1,P4-tetraphosphate to yield ADP. The protein is Bis(5'-nucleosyl)-tetraphosphatase, symmetrical of Azotobacter vinelandii (strain DJ / ATCC BAA-1303).